A 269-amino-acid chain; its full sequence is Triosephosphate isomerase (269 aa).

8 to 10 (NWK) contributes to the substrate binding site. Catalysis depends on H105, which acts as the Electrophile. Residue E183 is the Proton acceptor of the active site. Substrate-binding positions include G189, S227, and 248–249 (GG).

The protein belongs to the triosephosphate isomerase family. Homodimer.

The protein resides in the cytoplasm. It catalyses the reaction D-glyceraldehyde 3-phosphate = dihydroxyacetone phosphate. The protein operates within carbohydrate biosynthesis; gluconeogenesis. It participates in carbohydrate degradation; glycolysis; D-glyceraldehyde 3-phosphate from glycerone phosphate: step 1/1. In terms of biological role, involved in the gluconeogenesis. Catalyzes stereospecifically the conversion of dihydroxyacetone phosphate (DHAP) to D-glyceraldehyde-3-phosphate (G3P). This chain is Triosephosphate isomerase, found in Psychrobacter cryohalolentis (strain ATCC BAA-1226 / DSM 17306 / VKM B-2378 / K5).